A 374-amino-acid polypeptide reads, in one-letter code: Alanine racemase (374 aa).

Catalysis depends on Lys40, which acts as the Proton acceptor; specific for D-alanine. Lys40 is subject to N6-(pyridoxal phosphate)lysine. Arg139 contributes to the substrate binding site. Tyr261 serves as the catalytic Proton acceptor; specific for L-alanine. Met309 provides a ligand contact to substrate.

It belongs to the alanine racemase family. It depends on pyridoxal 5'-phosphate as a cofactor.

The enzyme catalyses L-alanine = D-alanine. It participates in amino-acid biosynthesis; D-alanine biosynthesis; D-alanine from L-alanine: step 1/1. Its function is as follows. Catalyzes the interconversion of L-alanine and D-alanine. May also act on other amino acids. The chain is Alanine racemase (alr) from Rhodospirillum rubrum (strain ATCC 11170 / ATH 1.1.1 / DSM 467 / LMG 4362 / NCIMB 8255 / S1).